The chain runs to 416 residues: Serine/threonine-protein kinase 26 (416 aa).

Ala-2 bears the N-acetylalanine mark. Position 4 is a phosphoserine (Ser-4). Residues 24 to 274 enclose the Protein kinase domain; the sequence is FTKLERIGKG…AKELLKHKFI (251 aa). Residues 30–38 and Lys-53 contribute to the ATP site; that span reads IGKGSFGEV. Asp-144 functions as the Proton acceptor in the catalytic mechanism. The residue at position 178 (Thr-178) is a Phosphothreonine; by autocatalysis. Residues 297-340 are disordered; it reads EGHSDDESDSEGSDSESTSRENNTHPEWSFTTVRKKPDPKKVQN. Residues Ser-300, Ser-304, Ser-306, Ser-309, and Ser-325 each carry the phosphoserine modification. 2 positions are modified to phosphothreonine: Thr-327 and Thr-328.

Belongs to the protein kinase superfamily. STE Ser/Thr protein kinase family. STE20 subfamily. In terms of assembly, homodimer. Interacts with PDCD10. Interacts with GOLGA2. Interacts with CTTNBP2NL. Interacts with RIPOR1 (via C-terminus); this interaction occurs in a PDCD10-dependent and Rho-independent manner. Interacts with PDCD10; this interaction is required for the association of STK26 with RIPOR1. Part of the core of STRIPAK complexes composed of PP2A catalytic and scaffolding subunits, the striatins (PP2A regulatory subunits), the striatin-associated proteins MOB4, STRIP1 and STRIP2, PDCD10 and members of the STE20 kinases, such as STK24 and STK26. Requires Mg(2+) as cofactor.

It localises to the cytoplasm. The protein localises to the golgi apparatus. The enzyme catalyses L-seryl-[protein] + ATP = O-phospho-L-seryl-[protein] + ADP + H(+). It catalyses the reaction L-threonyl-[protein] + ATP = O-phospho-L-threonyl-[protein] + ADP + H(+). Its activity is regulated as follows. Interaction with Golgi matrix protein GOLGA2 leads to autophosphorylation on Thr-178, possibly as a consequence of stabilization of dimer formation. May also be activated by C-terminal cleavage. Functionally, serine/threonine-protein kinase that acts as a mediator of cell growth. Modulates apoptosis. In association with STK24 negatively regulates Golgi reorientation in polarized cell migration upon RHO activation. Phosphorylates ATG4B at 'Ser-383', thereby increasing autophagic flux. Part of the striatin-interacting phosphatase and kinase (STRIPAK) complexes. STRIPAK complexes have critical roles in protein (de)phosphorylation and are regulators of multiple signaling pathways including Hippo, MAPK, nuclear receptor and cytoskeleton remodeling. Different types of STRIPAK complexes are involved in a variety of biological processes such as cell growth, differentiation, apoptosis, metabolism and immune regulation. This Homo sapiens (Human) protein is Serine/threonine-protein kinase 26.